The chain runs to 418 residues: ATP phosphoribosyltransferase regulatory subunit (418 aa).

Belongs to the class-II aminoacyl-tRNA synthetase family. HisZ subfamily. In terms of assembly, heteromultimer composed of HisG and HisZ subunits.

It is found in the cytoplasm. It functions in the pathway amino-acid biosynthesis; L-histidine biosynthesis; L-histidine from 5-phospho-alpha-D-ribose 1-diphosphate: step 1/9. In terms of biological role, required for the first step of histidine biosynthesis. May allow the feedback regulation of ATP phosphoribosyltransferase activity by histidine. This chain is ATP phosphoribosyltransferase regulatory subunit, found in Halothermothrix orenii (strain H 168 / OCM 544 / DSM 9562).